The primary structure comprises 249 residues: Adenylate kinase (249 aa).

43–48 lines the ATP pocket; it reads GAGKGT. Residues 63 to 92 are NMP; that stretch reads ATGDMLRAQVAAKTALGVEAKKIMDQGGLV. AMP-binding positions include Thr-64, Arg-69, 90 to 92, 119 to 122, and Gln-126; these read GLV and GFPR. The interval 160-197 is LID; the sequence is GRLVHPASGRSYHKLFNPPKKDMTDDVTGEPLVQRSDD. Residues Arg-161 and 170–171 contribute to the ATP site; that span reads SY. The segment at 177 to 197 is disordered; it reads PPKKDMTDDVTGEPLVQRSDD. 2 residues coordinate AMP: Arg-194 and Arg-205. An ATP-binding site is contributed by Gln-233.

It belongs to the adenylate kinase family. AK2 subfamily. Monomer.

The protein localises to the cytoplasm. Its subcellular location is the cytosol. The protein resides in the mitochondrion intermembrane space. It catalyses the reaction AMP + ATP = 2 ADP. In terms of biological role, catalyzes the reversible transfer of the terminal phosphate group between ATP and AMP. Plays an important role in cellular energy homeostasis and in adenine nucleotide metabolism. Adenylate kinase activity is critical for regulation of the phosphate utilization and the AMP de novo biosynthesis pathways. The sequence is that of Adenylate kinase from Candida albicans (strain SC5314 / ATCC MYA-2876) (Yeast).